We begin with the raw amino-acid sequence, 229 residues long: MFLFFFCDLFWLRLLLCMYYCVSRLCFIVYFNCLMLIFDFLLFCLFDLYLFVGLCLFLLLWFMLFNLYSLILYYCITYLNLYLLFCIVFLLYIAFLFLFCFLCDFFLFNNLLVGDSFMDVFFIRFLLCFLECFSLLCRCLSTFLRLFCNLLSSHFLLLMFFDFFYFIFVFFFYGVFCYFILFIFVFCFCLLFYVFLYLLDLFAAILQLFIFCNMILQLIMDFLLFLLFV.

7 consecutive transmembrane segments (helical) span residues 24-44 (RLCFIVYFNCLMLIFDFLLFC), 45-65 (LFDLYLFVGLCLFLLLWFMLF), 83-103 (LLFCIVFLLYIAFLFLFCFLC), 117-137 (FMDVFFIRFLLCFLECFSLLC), 143-163 (FLRLFCNLLSSHFLLLMFFDF), 177-199 (CYFILFIFVFCFCLLFYVFLYLL), and 206-228 (LQLFIFCNMILQLIMDFLLFLLF).

The protein belongs to the ATPase A chain family. As to quaternary structure, F-type ATPases have 2 components, CF(1) - the catalytic core - and CF(0) - the membrane proton channel. CF(1) has five subunits: alpha(3), beta(3), gamma(1), delta(1), epsilon(1). CF(0) has three main subunits: a, b and c.

It is found in the mitochondrion inner membrane. Its function is as follows. Mitochondrial membrane ATP synthase (F(1)F(0) ATP synthase or Complex V) produces ATP from ADP in the presence of a proton gradient across the membrane which is generated by electron transport complexes of the respiratory chain. F-type ATPases consist of two structural domains, F(1) - containing the extramembraneous catalytic core and F(0) - containing the membrane proton channel, linked together by a central stalk and a peripheral stalk. During catalysis, ATP synthesis in the catalytic domain of F(1) is coupled via a rotary mechanism of the central stalk subunits to proton translocation. Key component of the proton channel; it may play a direct role in the translocation of protons across the membrane. In Trypanosoma brucei brucei, this protein is ATP synthase subunit a (ATP6).